The following is a 158-amino-acid chain: Transcription elongation factor GreB (158 aa).

The stretch at 53-75 (KRRLREIDRRVRFLTKRLEVLQI) forms a coiled coil.

It belongs to the GreA/GreB family. GreB subfamily.

Its function is as follows. Necessary for efficient RNA polymerase transcription elongation past template-encoded arresting sites. The arresting sites in DNA have the property of trapping a certain fraction of elongating RNA polymerases that pass through, resulting in locked ternary complexes. Cleavage of the nascent transcript by cleavage factors such as GreA or GreB allows the resumption of elongation from the new 3'terminus. GreB releases sequences of up to 9 nucleotides in length. The sequence is that of Transcription elongation factor GreB from Haemophilus influenzae (strain ATCC 51907 / DSM 11121 / KW20 / Rd).